The sequence spans 513 residues: Sphingosine-1-phosphate transporter SPNS2 (513 aa).

11 helical membrane-spanning segments follow: residues 102-122 (GLLQTVFICSFMVAAPIFGYL), 130-150 (VILSSGIFFWSAITFSSSFIP), 163-183 (LVGIGEASYSTIAPTIIGDLF), 190-210 (LMLSVFYFAIPLGSGLGYITG), 222-242 (WALRVSPVLGVITGTLLLIFV), 276-296 (LATSTVSFATGALGMWIPLYL), 320-340 (LIFGAITCLTGFLGVIIGAGA), 354-374 (LVCAVGMLGSAIFICLVFVAA), 378-398 (IIAAYICIFAGETLLFSNWAI), 422-442 (TSHLLGDAGSPYLIGFISDLI), and 463-483 (LCPFVVVLGGMFFLATALFFL).

Belongs to the major facilitator superfamily. Spinster (TC 2.A.1.49) family.

Its subcellular location is the cell membrane. The protein localises to the endosome membrane. The catalysed reaction is sphing-4-enine 1-phosphate(in) = sphing-4-enine 1-phosphate(out). The enzyme catalyses sphinganine 1-phosphate(in) = sphinganine 1-phosphate(out). Its function is as follows. Lipid transporter that specifically mediates export of sphingosine-1-phosphate (sphing-4-enine 1-phosphate, S1P) and sphinganine-1-phosphate. This chain is Sphingosine-1-phosphate transporter SPNS2 (spns2), found in Xenopus tropicalis (Western clawed frog).